The following is a 222-amino-acid chain: Niacin transporter NiaX (222 aa).

5 consecutive transmembrane segments (helical) span residues 34 to 54 (NLII…MMPV), 72 to 94 (MAAM…LGFM), 101 to 120 (TIWL…AYVL), 135 to 155 (IFNF…VYAF), and 167 to 187 (ALLN…MIDF).

This sequence belongs to the vitamin uptake transporter (VUT/ECF) (TC 2.A.88) family. As to quaternary structure, in L.lactis forms a stable complex with EcfA, EcfA' and EcfT. In E.coli forms a stable energy-coupling factor (ECF) transporter complex composed of 2 membrane-embedded substrate-binding proteins (S component), 2 ATP-binding proteins (A and A' components) and 2 transmembrane proteins (T component), probably with a stoichiometry of 2:1:1:2. May be able to interact with more than 1 S component at a time.

The protein localises to the cell membrane. In terms of biological role, probably a niacin-binding protein that interacts with the energy-coupling factor (ECF) ABC-transporter complex. Unlike classic ABC transporters this ECF transporter provides the energy necessary to transport a number of different substrates. The substrates themselves are bound by transmembrane, not extracytoplasmic soluble proteins. Uptake of niacin into proteosomes containing EcfA1A2T and Niax has been demonstrated. Uptake requires hydrolyzable Mg-ATP and is substrate-specific; NiaX-containing proteosomes did not transport riboflavin. The sequence is that of Niacin transporter NiaX (niaX) from Lactococcus lactis subsp. cremoris (strain MG1363).